The sequence spans 382 residues: Alkanesulfonate monooxygenase (382 aa).

It belongs to the SsuD family.

The catalysed reaction is an alkanesulfonate + FMNH2 + O2 = an aldehyde + FMN + sulfite + H2O + 2 H(+). Its function is as follows. Catalyzes the desulfonation of aliphatic sulfonates. The polypeptide is Alkanesulfonate monooxygenase (Pseudomonas putida (strain GB-1)).